We begin with the raw amino-acid sequence, 431 residues long: 5'-deoxyadenosine deaminase (431 aa).

Zn(2+)-binding residues include histidine 65 and histidine 67. Glutamate 94 and histidine 185 together coordinate substrate. Residue histidine 212 coordinates Zn(2+). Positions 215 and 300 each coordinate substrate. Residue aspartate 300 coordinates Zn(2+).

This sequence belongs to the metallo-dependent hydrolases superfamily. MTA/SAH deaminase family. As to quaternary structure, homotetramer. Requires Zn(2+) as cofactor.

The catalysed reaction is 5'-deoxyadenosine + H2O + H(+) = 5'-deoxyinosine + NH4(+). It carries out the reaction S-adenosyl-L-homocysteine + H2O + H(+) = S-inosyl-L-homocysteine + NH4(+). It catalyses the reaction S-methyl-5'-thioadenosine + H2O + H(+) = S-methyl-5'-thioinosine + NH4(+). The enzyme catalyses adenosine + H2O + H(+) = inosine + NH4(+). Its pathway is amino-acid biosynthesis; S-adenosyl-L-methionine biosynthesis. Catalyzes the deamination of three SAM-derived enzymatic products, namely 5'-deoxyadenosine, S-adenosyl-L-homocysteine, and 5'-methylthioadenosine, to produce the inosine analogs. Can also deaminate adenosine. The preferred substrate for this enzyme is 5'-deoxyadenosine, but all these substrates are efficiently deaminated. Likely functions in a S-adenosyl-L-methionine (SAM) recycling pathway from S-adenosyl-L-homocysteine (SAH) produced from SAM-dependent methylation reactions. May also be involved in the recycling of 5'-deoxyadenosine, whereupon the 5'-deoxyribose moiety of 5'-deoxyinosine is further metabolized to deoxyhexoses used for the biosynthesis of aromatic amino acids in methanogens. The sequence is that of 5'-deoxyadenosine deaminase from Methanopyrus kandleri (strain AV19 / DSM 6324 / JCM 9639 / NBRC 100938).